A 1220-amino-acid polypeptide reads, in one-letter code: DNA polymerase catalytic subunit (1220 aa).

It belongs to the DNA polymerase type-B family. Forms a complex with the ssDNA-binding protein, the DNA polymerase processivity factor, and the alkaline exonuclease. Interacts with the helicase-primase complex composed of the primase, the helicase and the primase-associated factor; this interaction may coordinate leading and lagging strand DNA synthesis at the replication fork.

Its subcellular location is the host nucleus. The enzyme catalyses DNA(n) + a 2'-deoxyribonucleoside 5'-triphosphate = DNA(n+1) + diphosphate. It catalyses the reaction Endonucleolytic cleavage to 5'-phosphomonoester.. Functionally, replicates viral genomic DNA. The replication complex is composed of six viral proteins: the DNA polymerase, processivity factor, primase, primase-associated factor, helicase, and ssDNA-binding protein. Additionally, the polymerase contains an intrinsic ribonuclease H (RNase H) activity that specifically degrades RNA/DNA heteroduplexes or duplex DNA substrates in the 5' to 3' direction. Therefore, it can catalyze the excision of the RNA primers that initiate the synthesis of Okazaki fragments at a replication fork during viral DNA replication. The protein is DNA polymerase catalytic subunit (MDV043) of Gallid herpesvirus 2 (strain Chicken/Md5/ATCC VR-987) (GaHV-2).